Here is a 257-residue protein sequence, read N- to C-terminus: tRNA pseudouridine synthase A (257 aa).

The active-site Nucleophile is D53. Y111 serves as a coordination point for substrate.

This sequence belongs to the tRNA pseudouridine synthase TruA family. Homodimer.

It carries out the reaction uridine(38/39/40) in tRNA = pseudouridine(38/39/40) in tRNA. In terms of biological role, formation of pseudouridine at positions 38, 39 and 40 in the anticodon stem and loop of transfer RNAs. This Xanthomonas oryzae pv. oryzae (strain MAFF 311018) protein is tRNA pseudouridine synthase A.